Reading from the N-terminus, the 29-residue chain is Cytochrome b6-f complex subunit 8 (29 aa).

Residues 3–23 traverse the membrane as a helical segment; the sequence is IVSLAWAGLMVVFTFSLSLVV.

Belongs to the PetN family. In terms of assembly, the 4 large subunits of the cytochrome b6-f complex are cytochrome b6, subunit IV (17 kDa polypeptide, PetD), cytochrome f and the Rieske protein, while the 4 small subunits are PetG, PetL, PetM and PetN. The complex functions as a dimer.

The protein localises to the plastid. Its subcellular location is the chloroplast thylakoid membrane. Its function is as follows. Component of the cytochrome b6-f complex, which mediates electron transfer between photosystem II (PSII) and photosystem I (PSI), cyclic electron flow around PSI, and state transitions. The protein is Cytochrome b6-f complex subunit 8 of Arabis hirsuta (Hairy rock-cress).